The following is a 154-amino-acid chain: D-aminoacyl-tRNA deacylase (154 aa).

A Gly-cisPro motif, important for rejection of L-amino acids motif is present at residues 137–138; sequence GP.

Belongs to the DTD family. As to quaternary structure, homodimer.

It is found in the cytoplasm. The catalysed reaction is glycyl-tRNA(Ala) + H2O = tRNA(Ala) + glycine + H(+). The enzyme catalyses a D-aminoacyl-tRNA + H2O = a tRNA + a D-alpha-amino acid + H(+). Functionally, an aminoacyl-tRNA editing enzyme that deacylates mischarged D-aminoacyl-tRNAs. Also deacylates mischarged glycyl-tRNA(Ala), protecting cells against glycine mischarging by AlaRS. Acts via tRNA-based rather than protein-based catalysis; rejects L-amino acids rather than detecting D-amino acids in the active site. By recycling D-aminoacyl-tRNA to D-amino acids and free tRNA molecules, this enzyme counteracts the toxicity associated with the formation of D-aminoacyl-tRNA entities in vivo and helps enforce protein L-homochirality. This is D-aminoacyl-tRNA deacylase from Thermomicrobium roseum (strain ATCC 27502 / DSM 5159 / P-2).